A 73-amino-acid chain; its full sequence is Putative sulfur carrier protein AF_0556 (73 aa).

The Cysteine persulfide intermediate role is filled by Cys11.

It belongs to the sulfur carrier protein TusA family.

This Archaeoglobus fulgidus (strain ATCC 49558 / DSM 4304 / JCM 9628 / NBRC 100126 / VC-16) protein is Putative sulfur carrier protein AF_0556.